The chain runs to 436 residues: S-locus-specific glycoprotein S6 (436 aa).

The first 31 residues, 1–31 (MKGVRKPYDNSYTLSFLLVFFVLILFCPAFS), serve as a signal peptide directing secretion. The Bulb-type lectin domain maps to 34–156 (TLSSTESLRI…SNNDASEYLW (123 aa)). Asn46, Asn64, Asn114, Asn121, Asn245, Asn261, and Asn390 each carry an N-linked (GlcNAc...) asparagine glycan. The region spanning 351-431 (CSGDGFTRMK…HGQDLYVRLA (81 aa)) is the PAN domain. 2 cysteine pairs are disulfide-bonded: Cys381–Cys406 and Cys389–Cys391.

In terms of tissue distribution, stigma.

Involved in sporophytic self-incompatibility system (the inability of flowering plants to achieve self-fertilization). This Brassica oleracea (Wild cabbage) protein is S-locus-specific glycoprotein S6 (SLSG).